Here is a 27-residue protein sequence, read N- to C-terminus: ALSILKGLEKLAKMGIALTNCKATKKC.

A disulfide bridge links cysteine 21 with cysteine 27.

Expressed by the skin glands.

The protein resides in the secreted. In terms of biological role, antimicrobial activity against Gram-negative bacterium E.coli. In Lithobates palustris (Pickerel frog), this protein is Palustrin-1d.